The sequence spans 335 residues: Methionine aminopeptidase 1D, mitochondrial (335 aa).

The N-terminal 19 residues, 1 to 19 (MAAPIGVPLLVRGGCQRIL), are a transit peptide targeting the mitochondrion. Residue His-161 coordinates substrate. The a divalent metal cation site is built by Asp-178, Asp-189, and His-252. Residue His-259 coordinates substrate. Glu-284 and Glu-315 together coordinate a divalent metal cation.

This sequence belongs to the peptidase M24A family. Methionine aminopeptidase type 1 subfamily. Requires Co(2+) as cofactor. Zn(2+) is required as a cofactor. It depends on Mn(2+) as a cofactor. Fe(2+) serves as cofactor.

It is found in the mitochondrion. The catalysed reaction is Release of N-terminal amino acids, preferentially methionine, from peptides and arylamides.. Functionally, removes the N-terminal methionine from nascent proteins. The N-terminal methionine is often cleaved when the second residue in the primary sequence is small and uncharged (Met-Ala-, Cys, Gly, Pro, Ser, Thr, or Val). Requires deformylation of the N(alpha)-formylated initiator methionine before it can be hydrolyzed. The protein is Methionine aminopeptidase 1D, mitochondrial (Metap1d) of Mus musculus (Mouse).